A 464-amino-acid chain; its full sequence is Serine protease PepD (464 aa).

The disordered stretch occupies residues 1 to 71 (MAKLARVVGL…TQYRQPYEAL (71 aa)). At 1 to 100 (MAKLARVVGL…GMVRQRPRAG (100 aa)) the chain is on the cytoplasmic side. The segment covering 39–48 (QGQQQTYSQQ) has biased composition (low complexity). A helical membrane pass occupies residues 101–121 (MLAIGAVTIAVVSAGIGGAAA). The Periplasmic portion of the chain corresponds to 122–464 (SLVGFNRAPA…VQVTLGKAEQ (343 aa)). Active-site charge relay system residues include histidine 197, aspartate 236, and serine 317. A PDZ domain is found at 368-449 (LISTGKASHA…TVALTFQDPS (82 aa)).

This sequence belongs to the peptidase S1C family. As to quaternary structure, homotrimer. Interacts with numerous proteins, including the 35 kDa antigen PspA.

It is found in the cell inner membrane. The protein resides in the secreted. The protein localises to the cell wall. It carries out the reaction Acts on substrates that are at least partially unfolded. The cleavage site P1 residue is normally between a pair of hydrophobic residues, such as Val-|-Val.. Probably regulates its own activity by autocleavage, which removes the PDZ domain. Inhibited by the serine protease inhibitor diisopropylfluorophosphate (DFP). Inhibited by fluoroquinolone such as ciprofloxacin, moxifloxacin and ofloxacin and their analogs. Functionally, required for virulence. Acts both as a protease, which degrades and/or refolds damaged substrate targets, and as a chaperone. Plays an important role in the stress response network mediated through the two-component regulatory system MprAB and SigE signaling networks. May utilize its PDZ domain to recognize and process misfolded proteins at the cell membrane, leading to activation of the MprAB and SigE signaling pathways and subsequent establishment of a positive feedback loop that facilitates bacterial adaptation. Interacts with and potentially cleaves several proteins, including the 35 kDa antigen PspA. Proteolytic cleavage of PspA may help to maintain cell envelope homeostasis in Mycobacterium and regulate specific stress response pathways during periods of extracytoplasmic stress. In vitro, exhibits proteolytic activity against the artificial substrate beta-casein. The protein is Serine protease PepD of Mycobacterium tuberculosis (strain ATCC 25618 / H37Rv).